The primary structure comprises 444 residues: Tol-Pal system protein TolB (444 aa).

The first 26 residues, 1-26 (MTLFRTLAPMGLALALLLPAAVPAAA), serve as a signal peptide directing secretion. Over residues 281–310 (IYTLDTGSGTRRQLTNSPSIETAPSYSPDG) the composition is skewed to polar residues. The disordered stretch occupies residues 281–311 (IYTLDTGSGTRRQLTNSPSIETAPSYSPDGS).

It belongs to the TolB family. As to quaternary structure, the Tol-Pal system is composed of five core proteins: the inner membrane proteins TolA, TolQ and TolR, the periplasmic protein TolB and the outer membrane protein Pal. They form a network linking the inner and outer membranes and the peptidoglycan layer.

The protein localises to the periplasm. Part of the Tol-Pal system, which plays a role in outer membrane invagination during cell division and is important for maintaining outer membrane integrity. In Cereibacter sphaeroides (strain ATCC 17029 / ATH 2.4.9) (Rhodobacter sphaeroides), this protein is Tol-Pal system protein TolB.